The sequence spans 121 residues: UPF0145 protein SAV_4658 (121 aa).

It belongs to the UPF0145 family.

This is UPF0145 protein SAV_4658 from Streptomyces avermitilis (strain ATCC 31267 / DSM 46492 / JCM 5070 / NBRC 14893 / NCIMB 12804 / NRRL 8165 / MA-4680).